We begin with the raw amino-acid sequence, 186 residues long: Ribosome-recycling factor (186 aa).

Belongs to the RRF family.

Its subcellular location is the cytoplasm. Its function is as follows. Responsible for the release of ribosomes from messenger RNA at the termination of protein biosynthesis. May increase the efficiency of translation by recycling ribosomes from one round of translation to another. This Coprothermobacter proteolyticus (strain ATCC 35245 / DSM 5265 / OCM 4 / BT) protein is Ribosome-recycling factor.